A 310-amino-acid polypeptide reads, in one-letter code: tRNA dimethylallyltransferase (310 aa).

11–18 (GPTAVGKT) serves as a coordination point for ATP. 13-18 (TAVGKT) lines the substrate pocket. The segment at 36-39 (DSMQ) is interaction with substrate tRNA.

Belongs to the IPP transferase family. In terms of assembly, monomer. Mg(2+) is required as a cofactor.

It catalyses the reaction adenosine(37) in tRNA + dimethylallyl diphosphate = N(6)-dimethylallyladenosine(37) in tRNA + diphosphate. Functionally, catalyzes the transfer of a dimethylallyl group onto the adenine at position 37 in tRNAs that read codons beginning with uridine, leading to the formation of N6-(dimethylallyl)adenosine (i(6)A). This is tRNA dimethylallyltransferase from Shouchella clausii (strain KSM-K16) (Alkalihalobacillus clausii).